Consider the following 741-residue polypeptide: Cellulose 1,4-beta-cellobiosidase (reducing end) CelS (741 aa).

A signal peptide spans 1–27; that stretch reads MVKSRKISILLAVAMLVSIMIPTTAFA. Glu-76 provides a ligand contact to substrate. Glu-87 (proton donor) is an active-site residue. Substrate is bound by residues Thr-140, Asn-204, Asp-241, Gln-247, and 251 to 252; that span reads TN. Asp-255 (nucleophile) is an active-site residue. Substrate contacts are provided by residues 301–302, 326–327, Tyr-421, Asp-520, and 645–646; these read KY, WY, and WH. In terms of domain architecture, Dockerin spans 673 to 739; that stretch reads STKLYGDVND…ILKEIDTLPY (67 aa). 12 residues coordinate Ca(2+): Asp-679, Asn-681, Asp-683, Gly-684, Lys-685, Asp-690, Asp-711, Leu-712, Asn-713, Asp-715, Arg-717, and Asp-722.

This sequence belongs to the glycosyl hydrolase 48 (cellulase L) family.

It localises to the secreted. The enzyme catalyses Hydrolysis of (1-&gt;4)-beta-D-glucosidic linkages in cellulose and similar substrates, releasing cellobiose from the reducing ends of the chains.. With respect to regulation, inhibited by cellobiose and lactose, but not by glucose. This enzyme catalyzes the exohydrolysis of 1,4-beta-glucosidic linkages in cellulose with a preference for amorphous or crystalline cellulose over carboxymethyl cellulose. In Acetivibrio thermocellus (strain ATCC 27405 / DSM 1237 / JCM 9322 / NBRC 103400 / NCIMB 10682 / NRRL B-4536 / VPI 7372) (Clostridium thermocellum), this protein is Cellulose 1,4-beta-cellobiosidase (reducing end) CelS (celS).